Consider the following 226-residue polypeptide: RING-H2 finger protein ATL75 (226 aa).

Residues 60–80 (LMLLSVLICGIICCLGLHYII) form a helical membrane-spanning segment. An RING-type; atypical zinc finger spans residues 136–178 (CVICLSDFVSGEQIRMLPKCHHGFHVRCIDKWLQQHLTCPKCR).

The protein belongs to the RING-type zinc finger family. ATL subfamily.

It is found in the membrane. The enzyme catalyses S-ubiquitinyl-[E2 ubiquitin-conjugating enzyme]-L-cysteine + [acceptor protein]-L-lysine = [E2 ubiquitin-conjugating enzyme]-L-cysteine + N(6)-ubiquitinyl-[acceptor protein]-L-lysine.. It functions in the pathway protein modification; protein ubiquitination. This chain is RING-H2 finger protein ATL75 (ATL75), found in Arabidopsis thaliana (Mouse-ear cress).